The following is a 583-amino-acid chain: Cell division protein FtsZ (583 aa).

GTP contacts are provided by residues G24–N28, G111–G113, E142, R146, and D190. Disordered regions lie at residues H391 to A425 and T510 to N583. The segment covering A412–A425 has biased composition (low complexity).

Belongs to the FtsZ family. In terms of assembly, homodimer. Polymerizes to form a dynamic ring structure in a strictly GTP-dependent manner. Interacts directly with several other division proteins.

The protein resides in the cytoplasm. Its function is as follows. Essential cell division protein that forms a contractile ring structure (Z ring) at the future cell division site. The regulation of the ring assembly controls the timing and the location of cell division. One of the functions of the FtsZ ring is to recruit other cell division proteins to the septum to produce a new cell wall between the dividing cells. Binds GTP and shows GTPase activity. In Rhizobium radiobacter (Agrobacterium tumefaciens), this protein is Cell division protein FtsZ.